A 54-amino-acid polypeptide reads, in one-letter code: MQSLTLEQEFKLKVYKENLKKLTLKQSQKHLVEVLKQMMLKDNIIKYLIRNSYF.

This sequence belongs to the ycf18/nblA family.

The protein localises to the plastid. Its subcellular location is the chloroplast. This is an uncharacterized protein from Cyanidium caldarium (Red alga).